The primary structure comprises 234 residues: Urease subunit alpha (234 aa).

The segment at 1–102 (MKLTPKELDK…LVTIHTPVEA (102 aa)) is urease gamma. A urease beta region spans residues 103-234 (GSDKLAPGEV…GTINCGCDNK (132 aa)).

It in the N-terminal section; belongs to the urease gamma subunit family. This sequence in the C-terminal section; belongs to the urease beta subunit family. Heterohexamer of 3 UreA (alpha) and 3 UreB (beta) subunits.

It localises to the cytoplasm. The enzyme catalyses urea + 2 H2O + H(+) = hydrogencarbonate + 2 NH4(+). Its pathway is nitrogen metabolism; urea degradation; CO(2) and NH(3) from urea (urease route): step 1/1. This Helicobacter heilmannii protein is Urease subunit alpha.